Reading from the N-terminus, the 248-residue chain is MKTLILLIQFFTRIPLPVQINMDEINLKKGSALLPFVGVIIGAWNWLIFTLVALLMPLPVAIIAGLFAEIIITGGFHVDALADTADGLFSSRKRERMLEIMKDSRVGANGVIAICFYFLFYGSLFLSVPDTQQIGWLFFVLPIVAKGVTMLLFAKMTYAGSKAGLGSIFLGVPWWPVVIAQVIVLVALGLFFSYIGVIAYAGVILFTIIYRAFVYKRIGGMNGDTLGAGGQMGQLICLFCLVLLWGLI.

7 helical membrane-spanning segments follow: residues 24–44 (EINL…IGAW), 70–90 (IIIT…GLFS), 106–126 (VGAN…SLFL), 134–154 (IGWL…LLFA), 157–177 (TYAG…WWPV), 188–210 (LGLF…TIIY), and 228–248 (AGGQ…WGLI).

It belongs to the CobS family. Requires Mg(2+) as cofactor.

The protein resides in the cell membrane. The catalysed reaction is alpha-ribazole + adenosylcob(III)inamide-GDP = adenosylcob(III)alamin + GMP + H(+). The enzyme catalyses alpha-ribazole 5'-phosphate + adenosylcob(III)inamide-GDP = adenosylcob(III)alamin 5'-phosphate + GMP + H(+). It functions in the pathway cofactor biosynthesis; adenosylcobalamin biosynthesis; adenosylcobalamin from cob(II)yrinate a,c-diamide: step 7/7. In terms of biological role, joins adenosylcobinamide-GDP and alpha-ribazole to generate adenosylcobalamin (Ado-cobalamin). Also synthesizes adenosylcobalamin 5'-phosphate from adenosylcobinamide-GDP and alpha-ribazole 5'-phosphate. This is Adenosylcobinamide-GDP ribazoletransferase from Listeria monocytogenes serotype 4b (strain CLIP80459).